The chain runs to 394 residues: Probable peptidoglycan glycosyltransferase FtsW (394 aa).

Topologically, residues 1–26 (MNTMRPRHLNQRGKPVSRPISLYDKW) are cytoplasmic. The chain crosses the membrane as a helical span at residues 27–47 (LIGAVFGLLIIGLMMVASSSV). The Periplasmic segment spans residues 48–57 (MISTKYFHQP). A helical transmembrane segment spans residues 58–78 (FHFLIRQACYLFVGLLLALIV). Topologically, residues 79–88 (VRTDSSFWEK) are cytoplasmic. The chain crosses the membrane as a helical span at residues 89–109 (ISMPMMIGCVFLLLIVLIPGI). Residues 110-118 (GKSVNGSRR) lie on the Periplasmic side of the membrane. A helical membrane pass occupies residues 119-139 (WLALGPIGVQVSELTKLAMIF). The Cytoplasmic segment spans residues 140–154 (YLSGYLVRQQEAVCE). A helical transmembrane segment spans residues 155-175 (SIFGFIKPMAILAVVSVLLLL). Residues 176–177 (EP) are Periplasmic-facing. Residues 178–198 (DFGATVVISGTVMAMLFLAGV) form a helical membrane-spanning segment. Over 199 to 201 (KLR) the chain is Cytoplasmic. The chain crosses the membrane as a helical span at residues 202–222 (YYFGLMLVVVTALALLAVSSP). At 223-278 (YRVARLTAFLDPWADQYNSGYQLTQSLIAFGRGGWFGTGLGESIQKLLYLPEAHTD) the chain is on the periplasmic side. The chain crosses the membrane as a helical span at residues 279–299 (FLFAVIAEELGLFGILVVITL). The Cytoplasmic segment spans residues 300-327 (YSILVIRGLNIGYTAYTQERHFASYTAY). The helical transmembrane segment at 328–348 (GLTIWLALQASINMGVNAGLL) threads the bilayer. The Periplasmic portion of the chain corresponds to 349–354 (PTKGLT). Residues 355–375 (LPLLSYGGASMVINCIVIALL) form a helical membrane-spanning segment. The Cytoplasmic portion of the chain corresponds to 376 to 394 (LRIDHENRWQSLGLRPLTA).

This sequence belongs to the SEDS family. FtsW subfamily.

It is found in the cell inner membrane. It catalyses the reaction [GlcNAc-(1-&gt;4)-Mur2Ac(oyl-L-Ala-gamma-D-Glu-L-Lys-D-Ala-D-Ala)](n)-di-trans,octa-cis-undecaprenyl diphosphate + beta-D-GlcNAc-(1-&gt;4)-Mur2Ac(oyl-L-Ala-gamma-D-Glu-L-Lys-D-Ala-D-Ala)-di-trans,octa-cis-undecaprenyl diphosphate = [GlcNAc-(1-&gt;4)-Mur2Ac(oyl-L-Ala-gamma-D-Glu-L-Lys-D-Ala-D-Ala)](n+1)-di-trans,octa-cis-undecaprenyl diphosphate + di-trans,octa-cis-undecaprenyl diphosphate + H(+). Its pathway is cell wall biogenesis; peptidoglycan biosynthesis. Functionally, peptidoglycan polymerase that is essential for cell division. This chain is Probable peptidoglycan glycosyltransferase FtsW, found in Legionella pneumophila subsp. pneumophila (strain Philadelphia 1 / ATCC 33152 / DSM 7513).